A 267-amino-acid polypeptide reads, in one-letter code: Expansin-B10 (267 aa).

Residues 1 to 22 form the signal peptide; sequence MASSCLLLACVVAAAMVSAVSC. N-linked (GlcNAc...) asparagine glycosylation occurs at Asn32. The 107-residue stretch at 61-167 folds into the Expansin-like EG45 domain; it reads GGACGYKDID…RRVRCKYPGE (107 aa). 3 disulfide bridges follow: Cys64–Cys92, Cys95–Cys162, and Cys100–Cys106. Positions 181-262 constitute an Expansin-like CBD domain; it reads NYFAVLVKYV…NWKANALYKS (82 aa). An N-linked (GlcNAc...) asparagine glycan is attached at Asn213.

Belongs to the expansin family. Expansin B subfamily.

The protein resides in the secreted. The protein localises to the cell wall. Its subcellular location is the membrane. May cause loosening and extension of plant cell walls by disrupting non-covalent bonding between cellulose microfibrils and matrix glucans. No enzymatic activity has been found. May be required for rapid internodal elongation in deepwater rice during submergence. The sequence is that of Expansin-B10 (EXPB10) from Oryza sativa subsp. japonica (Rice).